The sequence spans 206 residues: Ribosomal RNA large subunit methyltransferase E (206 aa).

Positions 55, 57, 75, 91, and 116 each coordinate S-adenosyl-L-methionine. Lys-156 (proton acceptor) is an active-site residue.

The protein belongs to the class I-like SAM-binding methyltransferase superfamily. RNA methyltransferase RlmE family.

It is found in the cytoplasm. It carries out the reaction uridine(2552) in 23S rRNA + S-adenosyl-L-methionine = 2'-O-methyluridine(2552) in 23S rRNA + S-adenosyl-L-homocysteine + H(+). In terms of biological role, specifically methylates the uridine in position 2552 of 23S rRNA at the 2'-O position of the ribose in the fully assembled 50S ribosomal subunit. The polypeptide is Ribosomal RNA large subunit methyltransferase E (Blochmanniella floridana).